Here is a 161-residue protein sequence, read N- to C-terminus: Cell wall protein YLR042C (161 aa).

An N-terminal signal peptide occupies residues 1-24 (MKISQFGSLAFAPIVLLQLFIVQA). N77, N104, and N120 each carry an N-linked (GlcNAc...) asparagine glycan. A disordered region spans residues 111 to 139 (FTPLPSSSRNETKSSQTTNTISSSTSTGG). Over residues 123–137 (KSSQTTNTISSSTST) the composition is skewed to low complexity. Residue G139 is the site of GPI-anchor amidated glycine attachment. The propeptide at 140–161 (VGSVKPCLYFVLMLETIAYLFS) is removed in mature form.

Post-translationally, the GPI-anchor is attached to the protein in the endoplasmic reticulum and serves to target the protein to the cell surface. There, the glucosamine-inositol phospholipid moiety is cleaved off and the GPI-modified mannoprotein is covalently attached via its lipidless GPI glycan remnant to the 1,6-beta-glucan of the outer cell wall layer.

The protein localises to the secreted. The protein resides in the cell wall. It is found in the membrane. This chain is Cell wall protein YLR042C, found in Saccharomyces cerevisiae (strain ATCC 204508 / S288c) (Baker's yeast).